The primary structure comprises 87 residues: UPF0335 protein RHECIAT_CH0003797 (87 aa).

The protein belongs to the UPF0335 family.

This Rhizobium etli (strain CIAT 652) protein is UPF0335 protein RHECIAT_CH0003797.